The chain runs to 102 residues: Small ribosomal subunit protein uS10 (102 aa).

The protein belongs to the universal ribosomal protein uS10 family. Part of the 30S ribosomal subunit.

In terms of biological role, involved in the binding of tRNA to the ribosomes. The chain is Small ribosomal subunit protein uS10 from Beijerinckia indica subsp. indica (strain ATCC 9039 / DSM 1715 / NCIMB 8712).